The chain runs to 495 residues: MGSKRRNLSCSERHQKLVDENYCKKLHVQALKNVNSQIRNQMVQNENDNRVQRKQFLRLLQNEQFELDMEEAIQKAEENKRLKELQLKQEEKLAMELAKLKHESLKDEKMRQQVRENSIELRELEKKLKAAYMNKERAAQIAEKDAIKYEQMKRDAEIAKTMMEEHKRIIKEENAAEDKRNKAKAQYYLDLEKQLEEQEKKKQEAYEQLLKEKLMIDEIVRKIYEEDQLEKQQKLEKMNAMRRYIEEFQKEQALWRKKKREEMEEENRKIIEFANMQQQREEDRMAKVQENEEKRLQLQNALTQKLEEMLRQREDLEQVRQELYQEEQAEIYKSKLKEEAEKKLRKQKEMKQDFEEQMALKELVLQAAKEEEENFRKTMLAKFAEDDRIELMNAQKQRMKQLEHRRAVEKLIEERRQQFLADKQRELEEWQLQQRRQGFINAIIEEERLKLLKEHATNLLGYLPKGVFKKEDDIDLLGEEFRKVYQQRSEICEEK.

An interaction with BBOF1 region spans residues methionine 1–glutamate 314. A coiled-coil region spans residues valine 28–lysine 410. Tyrosine 188 carries the post-translational modification Phosphotyrosine.

It belongs to the MNS1 family. As to quaternary structure, able to form oligomers. Microtubule inner protein component of sperm flagellar doublet microtubules. Interacts with ODAD1. Interacts with BBOF1. As to expression, expressed in nasal respiratory epithelium and in the sperm.

Its subcellular location is the nucleus. The protein localises to the cytoplasm. It is found in the cytoskeleton. The protein resides in the cilium axoneme. It localises to the flagellum axoneme. In terms of biological role, microtubule inner protein (MIP) part of the dynein-decorated doublet microtubules (DMTs) in cilia axoneme, which is required for motile cilia beating. May play a role in the control of meiotic division and germ cell differentiation through regulation of pairing and recombination during meiosis. Required for sperm flagella assembly. May play a role in the assembly and function of the outer dynein arm-docking complex (ODA-DC). ODA-DC mediates outer dynein arms (ODA) binding onto the axonemal doublet microtubules. In Homo sapiens (Human), this protein is Meiosis-specific nuclear structural protein 1.